The following is an 89-amino-acid chain: Small ribosomal subunit protein uS15 (89 aa).

The protein belongs to the universal ribosomal protein uS15 family. In terms of assembly, part of the 30S ribosomal subunit. Forms a bridge to the 50S subunit in the 70S ribosome, contacting the 23S rRNA.

Functionally, one of the primary rRNA binding proteins, it binds directly to 16S rRNA where it helps nucleate assembly of the platform of the 30S subunit by binding and bridging several RNA helices of the 16S rRNA. Its function is as follows. Forms an intersubunit bridge (bridge B4) with the 23S rRNA of the 50S subunit in the ribosome. The chain is Small ribosomal subunit protein uS15 from Bartonella quintana (strain Toulouse) (Rochalimaea quintana).